The chain runs to 406 residues: Cysteine desulfurase (406 aa).

K226 is modified (N6-(pyridoxal phosphate)lysine). The active-site Cysteine persulfide intermediate is the C364.

Belongs to the class-V pyridoxal-phosphate-dependent aminotransferase family. Csd subfamily. Homodimer. Interacts with SufE and the SufBCD complex composed of SufB, SufC and SufD. The interaction with SufE is required to mediate the direct transfer of the sulfur atom from the S-sulfanylcysteine. It depends on pyridoxal 5'-phosphate as a cofactor.

Its subcellular location is the cytoplasm. It carries out the reaction (sulfur carrier)-H + L-cysteine = (sulfur carrier)-SH + L-alanine. The enzyme catalyses L-selenocysteine + AH2 = hydrogenselenide + L-alanine + A + H(+). It participates in cofactor biosynthesis; iron-sulfur cluster biosynthesis. Functionally, cysteine desulfurases mobilize the sulfur from L-cysteine to yield L-alanine, an essential step in sulfur metabolism for biosynthesis of a variety of sulfur-containing biomolecules. Component of the suf operon, which is activated and required under specific conditions such as oxidative stress and iron limitation. Acts as a potent selenocysteine lyase in vitro, that mobilizes selenium from L-selenocysteine. Selenocysteine lyase activity is however unsure in vivo. The chain is Cysteine desulfurase from Escherichia coli O17:K52:H18 (strain UMN026 / ExPEC).